The chain runs to 459 residues: Chromosomal replication initiator protein DnaA (459 aa).

Residues 1-73 (MEIPIESLWS…AHAVQDILGH (73 aa)) form a domain I, interacts with DnaA modulators region. Residues 73–117 (HPVGIYITVAQGDEVSHFSEREVSWESTNPSSIPESLPHHNHKTT) form a domain II region. The domain III, AAA+ region stretch occupies residues 118–334 (ELNSKYVFSR…GALIRAVAYI (217 aa)). Positions 162, 164, 165, and 166 each coordinate ATP. A domain IV, binds dsDNA region spans residues 335–459 (SIWGLPMTVE…INMTSRSQKS (125 aa)).

Belongs to the DnaA family. Oligomerizes as a right-handed, spiral filament on DNA at oriC.

It is found in the cytoplasm. In terms of biological role, plays an essential role in the initiation and regulation of chromosomal replication. ATP-DnaA binds to the origin of replication (oriC) to initiate formation of the DNA replication initiation complex once per cell cycle. Binds the DnaA box (a 9 base pair repeat at the origin) and separates the double-stranded (ds)DNA. Forms a right-handed helical filament on oriC DNA; dsDNA binds to the exterior of the filament while single-stranded (ss)DNA is stabiized in the filament's interior. The ATP-DnaA-oriC complex binds and stabilizes one strand of the AT-rich DNA unwinding element (DUE), permitting loading of DNA polymerase. After initiation quickly degrades to an ADP-DnaA complex that is not apt for DNA replication. Binds acidic phospholipids. The protein is Chromosomal replication initiator protein DnaA of Nostoc punctiforme (strain ATCC 29133 / PCC 73102).